The following is a 219-amino-acid chain: Ribose-5-phosphate isomerase A (219 aa).

Substrate-binding positions include 28-31, 81-84, and 94-97; these read SGST, DGAD, and KGGG. The Proton acceptor role is filled by E103. A substrate-binding site is contributed by K121.

It belongs to the ribose 5-phosphate isomerase family. In terms of assembly, homodimer.

The enzyme catalyses aldehydo-D-ribose 5-phosphate = D-ribulose 5-phosphate. Its pathway is carbohydrate degradation; pentose phosphate pathway; D-ribose 5-phosphate from D-ribulose 5-phosphate (non-oxidative stage): step 1/1. Functionally, catalyzes the reversible conversion of ribose-5-phosphate to ribulose 5-phosphate. The polypeptide is Ribose-5-phosphate isomerase A (Haemophilus influenzae (strain PittGG)).